A 468-amino-acid polypeptide reads, in one-letter code: 3-isopropylmalate dehydratase large subunit (468 aa).

Residues Cys-347, Cys-407, and Cys-410 each coordinate [4Fe-4S] cluster.

Belongs to the aconitase/IPM isomerase family. LeuC type 1 subfamily. As to quaternary structure, heterodimer of LeuC and LeuD. Requires [4Fe-4S] cluster as cofactor.

The enzyme catalyses (2R,3S)-3-isopropylmalate = (2S)-2-isopropylmalate. It functions in the pathway amino-acid biosynthesis; L-leucine biosynthesis; L-leucine from 3-methyl-2-oxobutanoate: step 2/4. Functionally, catalyzes the isomerization between 2-isopropylmalate and 3-isopropylmalate, via the formation of 2-isopropylmaleate. This chain is 3-isopropylmalate dehydratase large subunit, found in Synechococcus sp. (strain CC9311).